A 520-amino-acid chain; its full sequence is Anthranilate synthase component 1 (520 aa).

Residues serine 40 and 291–293 (PYM) contribute to the L-tryptophan site. Chorismate is bound at residue 328–329 (GT). Position 361 (glutamate 361) interacts with Mg(2+). Chorismate-binding positions include tyrosine 449, arginine 469, 483-485 (GAG), and glycine 485. Glutamate 498 serves as a coordination point for Mg(2+).

It belongs to the anthranilate synthase component I family. In terms of assembly, heterotetramer consisting of two non-identical subunits: a beta subunit (TrpG) and a large lpha subunit (TrpE). The cofactor is Mg(2+).

It catalyses the reaction chorismate + L-glutamine = anthranilate + pyruvate + L-glutamate + H(+). It functions in the pathway amino-acid biosynthesis; L-tryptophan biosynthesis; L-tryptophan from chorismate: step 1/5. With respect to regulation, cooperatively feedback inhibited by tryptophan. Part of a heterotetrameric complex that catalyzes the two-step biosynthesis of anthranilate, an intermediate in the biosynthesis of L-tryptophan. In the first step, the glutamine-binding beta subunit (TrpG) of anthranilate synthase (AS) provides the glutamine amidotransferase activity which generates ammonia as a substrate that, along with chorismate, is used in the second step, catalyzed by the large alpha subunit of AS (TrpE) to produce anthranilate. In the absence of TrpG, TrpE can synthesize anthranilate directly from chorismate and high concentrations of ammonia. The protein is Anthranilate synthase component 1 (trpE) of Escherichia coli (strain K12).